Reading from the N-terminus, the 124-residue chain is Small ribosomal subunit protein uS13 (124 aa).

Residues 91–124 (HRKGLPVNGQNTRNNARTRKGKPKAVTGKKQAGK) form a disordered region.

Belongs to the universal ribosomal protein uS13 family. As to quaternary structure, part of the 30S ribosomal subunit. Forms a loose heterodimer with protein S19. Forms two bridges to the 50S subunit in the 70S ribosome.

Its function is as follows. Located at the top of the head of the 30S subunit, it contacts several helices of the 16S rRNA. In the 70S ribosome it contacts the 23S rRNA (bridge B1a) and protein L5 of the 50S subunit (bridge B1b), connecting the 2 subunits; these bridges are implicated in subunit movement. Contacts the tRNAs in the A and P-sites. The sequence is that of Small ribosomal subunit protein uS13 from Acholeplasma laidlawii (strain PG-8A).